A 119-amino-acid chain; its full sequence is UPF0102 protein MS1289 (119 aa).

It belongs to the UPF0102 family.

The polypeptide is UPF0102 protein MS1289 (Mannheimia succiniciproducens (strain KCTC 0769BP / MBEL55E)).